We begin with the raw amino-acid sequence, 2567 residues long: Highly reducing polyketide synthase sor1 (2567 aa).

One can recognise a Ketosynthase family 3 (KS3) domain in the interval 14–436 (SEPIAIIGMS…GANAHIILED (423 aa)). Active-site for beta-ketoacyl synthase activity residues include Cys-187, His-322, and His-359. The malonyl-CoA:ACP transacylase (MAT) domain stretch occupies residues 550-841 (VFTGQGAQWW…VVEVGPHTAL (292 aa)). The tract at residues 939–1079 (HHLLGSLVEG…GLISIEFEAS (141 aa)) is N-terminal hotdog fold. Residues 939–1249 (HHLLGSLVEG…GFSYQSLGRS (311 aa)) form a dehydratase (DH) domain region. The region spanning 939–1252 (HHLLGSLVEG…YQSLGRSVSL (314 aa)) is the PKS/mFAS DH domain. The active-site Proton acceptor; for dehydratase activity is the His-971. Residues 1095–1252 (YKRQIPPAQL…YQSLGRSVSL (158 aa)) are C-terminal hotdog fold. Asp-1161 functions as the Proton donor; for dehydratase activity in the catalytic mechanism. The segment at 1426 to 1534 (LEIGASTGGI…RSLLKPGGTL (109 aa)) is methyltransferase (CMet) domain. Positions 1852–2163 (FLPELLVFGD…TEEETGKRVL (312 aa)) are enoyl reductase (ER) domain. The segment at 2187 to 2369 (ASYLIVGGNG…AVSIDLSLVD (183 aa)) is ketoreductase (KR) domain. The 78-residue stretch at 2481 to 2558 (EAISVVGSAV…QLVANVVDRS (78 aa)) folds into the Carrier domain. O-(pantetheine 4'-phosphoryl)serine is present on Ser-2518.

It functions in the pathway secondary metabolite biosynthesis. Functionally, highly reducing polyketide synthase; part of the SOR gene cluster that mediates the biosynthesis of sorbicillinoids, a diverse group of yellow secondary metabolites that restrict growth of competing pathogenic fungi but not of bacteria. Sorbicillinoids biosynthesis requires the action of two PKSs. The SOR cluster is required for the production of trichodimerol and dihydrotrichotetronin, with sor2 being sufficient for production of trichodimerol, but not dihydrotrichotetronin in the light. Sor1 iteratively combines three acetyl units and the growing chain is modified by the ketoacyl reductase subunit, and optional by the enoyl reductase subunit in the second cycle. The polyketide is then handed over to the PKS sor2, which adds three more acetyl units, and two methyl groups. Sor2 releases an aldehyde, which undergoes spontaneous cyclization resulting in the formation of sorbicillin or 2',3'-dihydrosorbicillin. The monooxygenase sor5 oxidizes sorbicillin and 2',3'-dihydrosorbicillin to 2',3'-dihydrosorbicillinol and sorbicillinol, respectively. The oxidoreductase sor8 further converts sorbicillinol into oxosorbicillinol. Sorbicillinol is the building block for the other sorbicillinoids such as disorbicillinol, bisvertinolon, dihydrobisvertinolone, and dihydrotrichotetronine. This Hypocrea jecorina (strain QM6a) (Trichoderma reesei) protein is Highly reducing polyketide synthase sor1.